The primary structure comprises 631 residues: Chaperone protein DnaK (631 aa).

T198 is modified (phosphothreonine; by autocatalysis). A disordered region spans residues 602–631 (EAAGGAQQAGKDDVVDAEFTEVDDDKKKSA).

Belongs to the heat shock protein 70 family.

Its function is as follows. Acts as a chaperone. This is Chaperone protein DnaK from Rhodopseudomonas palustris (strain ATCC BAA-98 / CGA009).